A 924-amino-acid chain; its full sequence is MGSALDTLKEFNPKPMKGQGSKKARIIIVQENPFDYEYRKKKYMTGKAGKLLKFGLAEVGIDPDEDVYYTSIVKYPTPENRLPTPDEIKESMDYMWAEIEVIDPDIIIPTGNLSLKFLTKMTAITKVRGKLYEIEGRKFFPMIHPNTVLKQPKYQDFFIKDLEILASLLEGKTPKNVLAFTKERRYCDTFEDAIDEIKRYLELPAGSRVVIDLETVKTNPFIEKVTMKKTTLEAYPMSQQPKIVGIGLSDRSGYGCAIPLYHRENLMKGNQIGTIVKFLRKLLEREDLEFIAHNGKFDIRWLRASLDIYLDISIWDTMLIHIIDYRGERYSWSKRLAWLETDMGGYDDALDGEKPKGEDEGNYDLIPWDILKVYLADDCDVTFRLSEKYIPLVEENEEKKWLWENIMVPGYYTLLDIEMDGIHVDREWLEVLRVSYEKEISRLEDKMREFPEGVAMEREMRDKWKERVMIGNIKSANRTPEQQDKFKKYKKYDPSKGGDKINFGSTKQLGELLFERMGLETVIFTDKGAPSTNDDSLKFMGSQSDFVKVLMEFRKANHLYNNFVSKLSLMIDPDNIVHPSYNIHGTVTGRLSSNEPNAQQFPRKVNTPTLFQYNFEIKKMFNSRFGDGGVIVQFDYSQLELRILVCYYSRPYTIDLYRSGADLHKAVASDAFGVAIEEVSKDQRTASKKIQFGIVYQESARGLSEDLRAEGITMSEDECEIFIKKYFKRFPKVSKWIRDTKKHVKDISTVKTLTGATRNLPDIDSIDQSKANEAERQAVNTPIQGTGSDCTLMSLILINQWLRESGLRSRICITVHDSIVLDCPKDEVLEVAKKVKHIMENLGEYNEFYKFLGDVPILSEMEIGRNYGDAFEATIEDIEEHGVDGFIEMKEKEKLEKDMKEFTKIIEDGGSIPDYARIYWENIS.

The 3'-5' exonuclease domain maps to 235–386; sequence YPMSQQPKIV…DDCDVTFRLS (152 aa).

This sequence belongs to the DNA polymerase type-A family.

It carries out the reaction DNA(n) + a 2'-deoxyribonucleoside 5'-triphosphate = DNA(n+1) + diphosphate. In terms of biological role, replicates viral genomic DNA. This polymerase possesses two enzymatic activities: DNA synthesis (polymerase) and an exonucleolytic activity that degrades single-stranded DNA in the 3'-5' direction. In Bacillus phage SP01 (Bacteriophage SP01), this protein is DNA polymerase (31).